We begin with the raw amino-acid sequence, 294 residues long: Phosphoprotein (294 aa).

The binding to monomeric RNA-free nucleoprotein stretch occupies residues 12-28 (MGNEAAKAAEAFQRSLK). The disordered stretch occupies residues 52-97 (KPTISKSTKVTTPPERRNAWGEKPDTTRNQTEEARNEATLEDTSRL). Residues 65–97 (PERRNAWGEKPDTTRNQTEEARNEATLEDTSRL) show a composition bias toward basic and acidic residues. Ser-106 carries the phosphoserine modification. The segment at 123 to 128 (KKKVTF) is binding to host phosphatase PP1. The tract at residues 135–157 (RYTKLEMEALELLSDNEDDDAES) is binding to protein M2-1. A phosphoserine mark is found at Ser-148, Ser-157, Ser-158, Ser-168, and Ser-171. The oligomerization and binding to RNA-directed RNA polymerase L stretch occupies residues 169 to 194 (ALSLEARLESIDEKLSMILGLLRTLN). A disordered region spans residues 234–294 (MKEEAKQKSK…PDDDLYSLTM (61 aa)). The tract at residues 251 to 279 (LTEKAKELNKIVEDESTSGESEEEEEEED) is binding to RNA-directed RNA polymerase L. The segment covering 253-263 (EKAKELNKIVE) has biased composition (basic and acidic residues). A compositionally biased stretch (acidic residues) spans 264-294 (DESTSGESEEEEEEEDEEESNPDDDLYSLTM). Residues 281-294 (EESNPDDDLYSLTM) are binding to the N-RNA complex.

It belongs to the pneumoviridae phosphoprotein P family. Homotetramer. Interacts with protein M2-1; the interaction between the two tetramers is required for the anti-termination and elongation transcriptional activities of protein M2-1. Interacts with host phosphatase PP1; this interaction recruits PP1 to the inclusion bodies. Formation of a complex PP1/M2-1/P allows P to target host PP1 phosphatase to the M2-1 substrate. Interacts with the nucleoprotein N; the phosphorylated phosphoprotein P binds to N-RNA complex. Interacts with the monomeric RNA-free nucleoprotein N. Interacts with RNA-directed RNA polymerase L (via N-terminus); the association of P and L forms the polymerase complex. Post-translationally, constitutively phosphorylated by host.

The protein resides in the virion. Its subcellular location is the host cytoplasm. Its function is as follows. Plays critical roles in regulating RNA replication and transcription through its interactions with multiple proteins. Tethers the RNA-directed RNA polymerase L to the nucleoprotein-RNA complex. Recruits the M2-1 protein, a processivity factor that is required for efficient transcription of viral RNA. Acts as a chaperone for neo-synthesized nucleoprotein by forming an N-P complex that preserves N in a monomeric and RNA-free state and prevents the association of nascent N with host cell RNAs. Recruits the host phosphatase PP1 to inclusion bodies to regulate viral transcription. This chain is Phosphoprotein, found in Avian metapneumovirus (isolate Canada goose/Minnesota/15a/2001) (AMPV).